An 881-amino-acid chain; its full sequence is Protein translocase subunit SecA (881 aa).

ATP contacts are provided by residues glutamine 83, 101–105 (GEGKT), and aspartate 492.

The protein belongs to the SecA family.

Its subcellular location is the plastid. It localises to the chloroplast stroma. It is found in the chloroplast thylakoid membrane. It catalyses the reaction ATP + H2O + cellular proteinSide 1 = ADP + phosphate + cellular proteinSide 2.. Has a central role in coupling the hydrolysis of ATP to the transfer of proteins across the thylakoid membrane. In Emiliania huxleyi (Coccolithophore), this protein is Protein translocase subunit SecA.